The sequence spans 573 residues: Adenine deaminase 2 (573 aa).

The protein belongs to the metallo-dependent hydrolases superfamily. Adenine deaminase family. It depends on Mn(2+) as a cofactor.

It catalyses the reaction adenine + H2O + H(+) = hypoxanthine + NH4(+). In Shouchella clausii (strain KSM-K16) (Alkalihalobacillus clausii), this protein is Adenine deaminase 2.